Reading from the N-terminus, the 283-residue chain is ATP synthase gamma chain (283 aa).

It belongs to the ATPase gamma chain family. As to quaternary structure, F-type ATPases have 2 components, CF(1) - the catalytic core - and CF(0) - the membrane proton channel. CF(1) has five subunits: alpha(3), beta(3), gamma(1), delta(1), epsilon(1). CF(0) has three main subunits: a, b and c.

Its subcellular location is the cell membrane. Its function is as follows. Produces ATP from ADP in the presence of a proton gradient across the membrane. The gamma chain is believed to be important in regulating ATPase activity and the flow of protons through the CF(0) complex. This is ATP synthase gamma chain from Desulforamulus reducens (strain ATCC BAA-1160 / DSM 100696 / MI-1) (Desulfotomaculum reducens).